The chain runs to 585 residues: Glutathione S-transferase C-terminal domain-containing protein homolog (585 aa).

The 156-residue stretch at 120-275 folds into the GST C-terminal domain; that stretch reads LGFKGSCLLA…DKCARVLRDL (156 aa).

It belongs to the GSTCD family.

The sequence is that of Glutathione S-transferase C-terminal domain-containing protein homolog from Drosophila melanogaster (Fruit fly).